A 180-amino-acid polypeptide reads, in one-letter code: MKCLLLALGLALACAAQAIIVTQTMKGLDIQKVAGTWYSLAMAASDISLLDAQSAPLRVYVEELKPTPEGDLEILLQKWENGECAQKKIIAEKTKIPAVFKIDALNENKVLVLDTDYKKYLLFCMENSAEPEQSLACQCLVRTPEVDDEALEKFDKALKALPMHIRLSFNPTQLEEQCHV.

Positions 1 to 18 are cleaved as a signal peptide; that stretch reads MKCLLLALGLALACAAQA. Cystine bridges form between C84–C178, C124–C137, and C124–C139.

It belongs to the calycin superfamily. Lipocalin family. As to quaternary structure, under physiological conditions beta-lactoglobulin exists as an equilibrium mixture of monomeric and dimeric forms. Interaction with LMBR1L is controversial. In terms of processing, alternate disulfide bonds occur in equal amounts. In terms of tissue distribution, synthesized in mammary gland and secreted in milk.

It localises to the secreted. Functionally, primary component of whey, it binds retinol and is probably involved in the transport of that molecule. This is Beta-lactoglobulin (LGB) from Bubalus bubalis (Domestic water buffalo).